A 217-amino-acid chain; its full sequence is Uridylate kinase (217 aa).

Residue Lys-6–Arg-10 participates in ATP binding. Gly-38 provides a ligand contact to UMP. 2 residues coordinate ATP: Gly-39 and Arg-43. UMP-binding positions include Asp-60 and Phe-107–Thr-113. ATP contacts are provided by Asn-134, Tyr-139, and Asp-142.

This sequence belongs to the UMP kinase family. Homohexamer.

It is found in the cytoplasm. It carries out the reaction UMP + ATP = UDP + ADP. Its pathway is pyrimidine metabolism; CTP biosynthesis via de novo pathway; UDP from UMP (UMPK route): step 1/1. Inhibited by UTP. In terms of biological role, catalyzes the reversible phosphorylation of UMP to UDP. The protein is Uridylate kinase of Pyrobaculum arsenaticum (strain DSM 13514 / JCM 11321 / PZ6).